The following is a 790-amino-acid chain: MTQLPQPLTPDELQKIDAYWRAANYLSVGQIYLLDNPLLQTPLTLQHIKPRLLGHWGTTPGLNFIYAHLNRIIRRDDLNMIYIAGPGHGGPALVANTYLEGTYSEHYPDISQDIQGMKHLFRQFSFPGGIGSHATPEIPGSIHEGGELGYALSHAFGAVFDNPDLIAACVVGDGEAETGPLATAWHSNKFLNPVHDGAVLPILHLNGYKIANPTILARISREELDQLFQGYGYQPYIVEGEDPLTMHQLMAGTLDQVLAEIRSIQTRARLDGVTQYPRWPMIILRTPKGWTGPATVDGLKTEGSWRSHQVPLSELAKKPEHIQQLEAWLRSYRPEELFDTQGRLVEPLQTLAPLGNRRMGANPHANGGSLMKQLRMPDFRKYAVEIVQPGQIEAESTRIMGSFLRDIMCLNLKTCNFRVFGPDETASNRLGSLYDVTPKTWLAETLPEDEHLAPDGRVMEILSEHTCQGWLEGYLLTGRHGLFSCYEAFIHIVDSMFNQHAKWLKVSKEIPWRRPIASLNYLLTSHVWRQDHNGFSHQDPGFIDHVINKKADTIRIYLPPDANCLLYITDKCLRSRNFVNVIVAGKQPQLQWLDMDAAIKHCTAGIGIWGWASNDQAGEPDVVIACAGDVPTIEVLAAVSILREHLPDLRIRVINVVDLMTLQHDREHPQGLSDREFDTLFTTDKPIIFAYHGYPWLIHRLTYRRTNHANLHVRGYKEEGTTTTPFDMTVLNDMDRFHLVDDVIDRVPHLGYKAAYLRQIMRDKLVEHREYINRHGEDMPEIRDWKWTAP.

The protein belongs to the XFP family. It depends on thiamine diphosphate as a cofactor.

In Nitrosomonas europaea (strain ATCC 19718 / CIP 103999 / KCTC 2705 / NBRC 14298), this protein is Probable phosphoketolase.